The sequence spans 134 residues: Retinoid-binding protein 7 (134 aa).

The protein belongs to the calycin superfamily. Fatty-acid binding protein (FABP) family. As to expression, highly expressed in white adipose tissue and mammary gland.

It is found in the cytoplasm. Its function is as follows. Intracellular transport of retinol. This is Retinoid-binding protein 7 (Rbp7) from Mus musculus (Mouse).